A 219-amino-acid polypeptide reads, in one-letter code: Small ribosomal subunit protein uS19 (219 aa).

Positions 1–128 (MGFKGAWNKR…YEEIYAQYKQ (128 aa)) are unknown. Residues 129–219 (MTEKKAYVDP…DKTAKVVKKK (91 aa)) form a small ribosomal subunit protein uS19 region.

Belongs to the universal ribosomal protein uS19 family.

Functionally, protein S19 forms a complex with S13 that binds strongly to the 16S ribosomal RNA. This chain is Small ribosomal subunit protein uS19, found in Aquifex pyrophilus.